A 357-amino-acid chain; its full sequence is Arginine kinase Cal b 2.0101 (357 aa).

One can recognise a Phosphagen kinase N-terminal domain in the interval 9–91 (KLEEGFKKLE…FDPIIEDYHK (83 aa)). 64–68 (GVGVY) serves as a coordination point for L-arginine. The Phosphagen kinase C-terminal domain occupies 119-356 (FVISTRVRCG…LELIKIEKEM (238 aa)). Residues 122–126 (STRVR) and histidine 185 contribute to the ATP site. A disulfide bridge links cysteine 201 with cysteine 271. Residue glutamate 225 coordinates L-arginine. Arginine 229 is a binding site for ATP. Cysteine 271 lines the L-arginine pocket. Residues 280–284 (RASVH) and 309–314 (RGTRGE) contribute to the ATP site. Position 314 (glutamate 314) interacts with L-arginine.

The protein belongs to the ATP:guanido phosphotransferase family. As to expression, expressed in chela muscle (at protein level). Expressed in muscle.

The catalysed reaction is L-arginine + ATP = N(omega)-phospho-L-arginine + ADP + H(+). Its function is as follows. Catalyzes the reversible transfer of high energy ATP gamma-phosphate group to L-arginine. This Callinectes bellicosus (Warrior swimming crab) protein is Arginine kinase Cal b 2.0101.